Reading from the N-terminus, the 345-residue chain is Trans-enoyl reductase tndF (345 aa).

The disordered stretch occupies residues 1-26; that stretch reads MAREHQAAILPQPGGPLSVGMRPTPK. Residues 44–49, 168–171, 191–194, tyrosine 209, and 244–245 each bind NADP(+); these read CDYYQR, SSSV, SPEH, and LD.

It belongs to the zinc-containing alcohol dehydrogenase family.

It functions in the pathway secondary metabolite biosynthesis; terpenoid biosynthesis. Its function is as follows. Trans-enoyl reductase; part of the gene cluster that mediates the biosynthesis of talaronoid C, a fusicoccane diterpenoid with an unprecedented tricyclic 5/8/6 ring system. The first step in the pathway is performed by the fusicoccadiene synthase tndC that possesses both prenyl transferase and terpene cyclase activity, converting isopentenyl diphosphate and dimethylallyl diphosphate into geranylgeranyl diphosphate (GGDP) and further converting GGDP into talarodiene, a precursor for talaronoid C. The remaining enzymes from the cluster include the cytochrome P450 monooxygenase tndB, the aldehyde reductase tndE and the alcohol dehydrogenase tndF that are involved in the conversion of talarodiene into talaronoid C. This Aspergillus flavipes protein is Trans-enoyl reductase tndF.